Consider the following 577-residue polypeptide: Nuclear receptor subfamily 4 group A member 1 (577 aa).

A DNA-binding region (nuclear receptor) is located at residues 243–318; the sequence is EGRCAVCGDN…VGMVKEVVRT (76 aa). 2 NR C4-type zinc fingers span residues 246–266 and 282–311; these read CAVC…CEGC and CLAN…VVGM. The tract at residues 247–333 is required for binding NBRE-containing DNA; the sequence is AVCGDNASCQ…RRGRLPSKPK (87 aa). Residues 339–574 enclose the NR LBD domain; the sequence is SPVDLINSLV…PIVDKIFMDT (236 aa). The segment at 500–523 is may bind lipopolysaccharide; sequence PKKVEELQSQIINCLKEHIPSSMN. The AF-2 stretch occupies residues 563–574; that stretch reads PPPIVDKIFMDT.

This sequence belongs to the nuclear hormone receptor family. NR4 subfamily. It depends on Zn(2+) as a cofactor.

It is found in the nucleus. Its subcellular location is the cytoplasm. It localises to the cytosol. In terms of biological role, orphan nuclear receptor. Binds the NGFI-B response element (NBRE) 5'-AAAAGGTCA-3'. Its function is as follows. In the cytosol, may detect bacterial lipopolysaccharide (LPS) and NBRE-containing mitochondrial DNA released during pyroptosis, and play a role in non-canonical inflammasome activation. In Xenopus laevis (African clawed frog), this protein is Nuclear receptor subfamily 4 group A member 1 (nr4a1).